Consider the following 223-residue polypeptide: Small ribosomal subunit protein uS5 (223 aa).

Residues 1 to 66 (MPPQQQRGRG…AERAQAETEF (66 aa)) are disordered. A compositionally biased stretch (gly residues) spans 13-22 (RGPGGPGGPG). Basic and acidic residues predominate over residues 53 to 66 (GGDKAERAQAETEF). Residues 66–129 (FQERVVQIRR…SDARKALIRV (64 aa)) enclose the S5 DRBM domain.

It belongs to the universal ribosomal protein uS5 family. In terms of assembly, part of the 30S ribosomal subunit. Contacts proteins S4 and S8.

In terms of biological role, with S4 and S12 plays an important role in translational accuracy. Functionally, located at the back of the 30S subunit body where it stabilizes the conformation of the head with respect to the body. The protein is Small ribosomal subunit protein uS5 of Gloeobacter violaceus (strain ATCC 29082 / PCC 7421).